The primary structure comprises 510 residues: Sphingolipid C9-methyltransferase B (510 aa).

The N-linked (GlcNAc...) asparagine glycan is linked to N55. Helical transmembrane passes span 62 to 82 and 84 to 104; these read LLGG…GGGA and TFVF…WTYA. N-linked (GlcNAc...) asparagine glycosylation occurs at N175. Residues 227 to 228, 264 to 272, 290 to 295, and 320 to 321 contribute to the S-adenosyl-L-methionine site; these read YT, MLDIGCGWG, TIAENQ, and YR. N294 is a glycosylation site (N-linked (GlcNAc...) asparagine).

This sequence belongs to the CFA/CMAS family.

The protein localises to the membrane. The catalysed reaction is a (4E,8E)-4-sphinga-4,8-dienine ceramide + S-adenosyl-L-methionine = a 9-methyl-(4E,8E)-sphinga-4,8-dienine ceramide + S-adenosyl-L-homocysteine + H(+). The protein operates within lipid metabolism; sphingolipid metabolism. Functionally, catalyzes methylation of the sphingoid base component of glucosylceramides (GluCers) at the C9-position. Sphingolipid C9-methylation requires 4,8-desaturated ceramides as substrates. Glucosylceramides play important roles in growth, differentiation and pathogenicity. The methyl group at the C9-position distinguishes fungal glucosylceramides from those of plants and animals and may thus play a role in host-pathogen interactions enabling the host to recognize the fungal attack and initiate specific defense responses. In Emericella nidulans (strain FGSC A4 / ATCC 38163 / CBS 112.46 / NRRL 194 / M139) (Aspergillus nidulans), this protein is Sphingolipid C9-methyltransferase B.